The chain runs to 321 residues: Tyrosine recombinase XerC (321 aa).

The Core-binding (CB) domain maps to 16-107 (SDIGQQIVRW…GLRSFARFLE (92 aa)). One can recognise a Tyr recombinase domain in the interval 128 to 315 (SVPKPIHMSA…DSERLLDVYR (188 aa)). Catalysis depends on residues arginine 173, lysine 199, histidine 267, arginine 270, and histidine 293. Tyrosine 302 acts as the O-(3'-phospho-DNA)-tyrosine intermediate in catalysis.

Belongs to the 'phage' integrase family. XerC subfamily. Forms a cyclic heterotetrameric complex composed of two molecules of XerC and two molecules of XerD.

It is found in the cytoplasm. In terms of biological role, site-specific tyrosine recombinase, which acts by catalyzing the cutting and rejoining of the recombining DNA molecules. The XerC-XerD complex is essential to convert dimers of the bacterial chromosome into monomers to permit their segregation at cell division. It also contributes to the segregational stability of plasmids. This Nitrobacter winogradskyi (strain ATCC 25391 / DSM 10237 / CIP 104748 / NCIMB 11846 / Nb-255) protein is Tyrosine recombinase XerC.